A 222-amino-acid chain; its full sequence is Salivary anticoagulant protein P23 (222 aa).

A signal peptide spans 1-17 (MLTVSLLTLSLAAYASA). Asn56, Asn73, Asn109, and Asn114 each carry an N-linked (GlcNAc...) asparagine glycan.

In terms of tissue distribution, salivary gland (at protein level). Adult midgut.

Its subcellular location is the secreted. Its function is as follows. Inhibits host coagulation by delaying thrombin generation and reducing endogenous thrombin potential (ETP). The protein is Salivary anticoagulant protein P23 of Ixodes scapularis (Black-legged tick).